The following is a 232-amino-acid chain: Uridylate kinase (232 aa).

An ATP-binding site is contributed by 13 to 14; it reads GS. Residue Gly-52 participates in UMP binding. Residues Gly-53 and Arg-57 each coordinate ATP. Residues Asp-74 and 122 to 128 contribute to the UMP site; that span reads LQPGQST. Thr-147, Tyr-153, and Asp-156 together coordinate ATP.

It belongs to the UMP kinase family. Homohexamer.

It localises to the cytoplasm. The enzyme catalyses UMP + ATP = UDP + ADP. It functions in the pathway pyrimidine metabolism; CTP biosynthesis via de novo pathway; UDP from UMP (UMPK route): step 1/1. Inhibited by UTP. Functionally, catalyzes the reversible phosphorylation of UMP to UDP. This chain is Uridylate kinase, found in Thermofilum pendens (strain DSM 2475 / Hrk 5).